Consider the following 426-residue polypeptide: 3-phosphoshikimate 1-carboxyvinyltransferase (426 aa).

3-phosphoshikimate contacts are provided by lysine 22, serine 23, and arginine 27. Lysine 22 contacts phosphoenolpyruvate. Glycine 96 and arginine 124 together coordinate phosphoenolpyruvate. 3-phosphoshikimate contacts are provided by serine 170, serine 171, glutamine 172, serine 198, aspartate 314, asparagine 337, and lysine 341. A phosphoenolpyruvate-binding site is contributed by glutamine 172. Residue aspartate 314 is the Proton acceptor of the active site. Arginine 345, arginine 387, and lysine 412 together coordinate phosphoenolpyruvate.

The protein belongs to the EPSP synthase family. As to quaternary structure, monomer.

The protein localises to the cytoplasm. It catalyses the reaction 3-phosphoshikimate + phosphoenolpyruvate = 5-O-(1-carboxyvinyl)-3-phosphoshikimate + phosphate. The protein operates within metabolic intermediate biosynthesis; chorismate biosynthesis; chorismate from D-erythrose 4-phosphate and phosphoenolpyruvate: step 6/7. Catalyzes the transfer of the enolpyruvyl moiety of phosphoenolpyruvate (PEP) to the 5-hydroxyl of shikimate-3-phosphate (S3P) to produce enolpyruvyl shikimate-3-phosphate and inorganic phosphate. The protein is 3-phosphoshikimate 1-carboxyvinyltransferase of Shewanella halifaxensis (strain HAW-EB4).